A 405-amino-acid polypeptide reads, in one-letter code: Cystathionine gamma-lyase (405 aa).

3 residues coordinate substrate: Arg62, Tyr114, and Arg119. The residue at position 212 (Lys212) is an N6-(pyridoxal phosphate)lysine. Residue Glu339 participates in substrate binding.

The protein belongs to the trans-sulfuration enzymes family. Homotetramer. Interacts with CALM in a calcium-dependent manner. It depends on pyridoxal 5'-phosphate as a cofactor.

The protein resides in the cytoplasm. It carries out the reaction L,L-cystathionine + H2O = 2-oxobutanoate + L-cysteine + NH4(+). The catalysed reaction is L-cysteine + H2O = hydrogen sulfide + pyruvate + NH4(+) + H(+). It catalyses the reaction L-homocysteine + H2O = 2-oxobutanoate + hydrogen sulfide + NH4(+) + H(+). The enzyme catalyses L-homoserine = 2-oxobutanoate + NH4(+). It carries out the reaction L-selenocystathionine + H2O = L-selenocysteine + 2-oxobutanoate + NH4(+). It participates in amino-acid biosynthesis; L-cysteine biosynthesis; L-cysteine from L-homocysteine and L-serine: step 2/2. Functionally, catalyzes the last step in the trans-sulfuration pathway from L-methionine to L-cysteine in a pyridoxal-5'-phosphate (PLP)-dependent manner, which consists on cleaving the L,L-cystathionine molecule into L-cysteine, ammonia and 2-oxobutanoate. Part of the L-cysteine derived from the trans-sulfuration pathway is utilized for biosynthesis of the ubiquitous antioxidant glutathione. Besides its role in the conversion of L-cystathionine into L-cysteine, it utilizes L-cysteine and L-homocysteine as substrates (at much lower rates than L,L-cystathionine) to produce hydrogen sulfide (H2S). In vitro, it converts two L-cysteine molecules into lanthionine and H2S, and two L-homocysteine molecules to homolanthionine and H2S, which can be particularly relevant under conditions of severe hyperhomocysteinemia. Lanthionine and homolanthionine are structural homologs of L,L-cystathionine that differ by the absence or presence of an extra methylene group, respectively. Acts as a cysteine-protein sulfhydrase by mediating sulfhydration of target proteins: sulfhydration consists of converting -SH groups into -SSH on specific cysteine residues of target proteins such as GAPDH, PTPN1 and NF-kappa-B subunit RELA, thereby regulating their function. By generating the gasotransmitter H2S, it participates in a number of physiological processes such as vasodilation, bone protection, and inflammation. Plays an essential role in myogenesis by contributing to the biogenesis of H2S in skeletal muscle tissue. Can also accept homoserine as substrate. Catalyzes the elimination of selenocystathionine (which can be derived from the diet) to yield selenocysteine, ammonia and 2-oxobutanoate. In Macaca fascicularis (Crab-eating macaque), this protein is Cystathionine gamma-lyase (CTH).